We begin with the raw amino-acid sequence, 197 residues long: Endoribonuclease YbeY (197 aa).

Residues His-156, His-160, and His-166 each contribute to the Zn(2+) site.

It belongs to the endoribonuclease YbeY family. Requires Zn(2+) as cofactor.

Its subcellular location is the cytoplasm. Single strand-specific metallo-endoribonuclease involved in late-stage 70S ribosome quality control and in maturation of the 3' terminus of the 16S rRNA. The chain is Endoribonuclease YbeY from Cupriavidus metallidurans (strain ATCC 43123 / DSM 2839 / NBRC 102507 / CH34) (Ralstonia metallidurans).